The sequence spans 235 residues: Exotoxin type C (235 aa).

The signal sequence occupies residues 1 to 27 (MKKINIIKIVFIITVILISTISPIIKS). Zn(2+)-binding residues include H194, H228, and D230.

The protein belongs to the staphylococcal/streptococcal toxin family.

Its function is as follows. Superantigen that acts as a causative agent of the symptoms associated with scarlet fever. Has been associated with streptococcal toxic shock-like disease and may play a role in the early events of rheumatic fever. Superantigens cross-link major histocompatibility complex (MHC) class II and T-cell receptor (TCR) molecules, resulting in an overstimulation of T-cells associated with a massive release of pyrogenic and inflammatory cytokines. The chain is Exotoxin type C (speC) from Streptococcus pyogenes serotype M1.